We begin with the raw amino-acid sequence, 405 residues long: Bone morphogenetic protein 4 (405 aa).

The first 19 residues, 1 to 19 (MIPGNRMLMVILLCQVLLG), serve as a signal peptide directing secretion. A propeptide spanning residues 20–291 (GTNHASLIPE…GHALTRRARR (272 aa)) is cleaved from the precursor. Asn-144, Asn-208, Asn-347, and Asn-362 each carry an N-linked (GlcNAc...) asparagine glycan. Intrachain disulfides connect Cys-305/Cys-370, Cys-334/Cys-402, and Cys-338/Cys-404.

The protein belongs to the TGF-beta family. As to quaternary structure, homodimer; disulfide-linked. Part of a complex consisting of TWSG1 and CHRD. Forms a ternary complex with chordin/CHRD and TSKU.

It localises to the secreted. Functionally, negatively regulates the structure and function of the limb apical ectodermal ridge. This chain is Bone morphogenetic protein 4 (BMP4), found in Gallus gallus (Chicken).